The following is a 216-amino-acid chain: Movement and silencing protein TGBp1 (216 aa).

Residues 1-110 (MEFCGGTLRT…GEVRPAHFTC (110 aa)) form the (+)RNA virus helicase ATP-binding domain. Residues 111–216 (SHTHRFGKST…RHTDSLLILN (106 aa)) form the (+)RNA virus helicase C-terminal domain.

The protein belongs to the Tymovirales TGBp1 protein family. In terms of assembly, homodimer and homooligomer. Interacts with capsid protein. Interacts with host AGO1; this interaction targets the host protein for degradation, thereby suppressing the antiviral RNA silencing.

It localises to the host cytoplasm. Functionally, transports viral genome to neighboring plant cells directly through plasmosdesmata, without any budding. The movement protein allows efficient cell to cell propagation, by bypassing the host cell wall barrier. Increases plasmodesma size exclusion limit. Acts as a suppressor of RNA-mediated gene silencing, also known as post-transcriptional gene silencing (PTGS), a mechanism of plant viral defense that limits the accumulation of viral RNAs. The sequence is that of Movement and silencing protein TGBp1 from Lilium formosanum.